The sequence spans 118 residues: Acetylcholine receptor subunit beta (118 aa).

The first 15 residues, 1 to 15, serve as a signal peptide directing secretion; it reads APTVALLLLCALCSA.

It belongs to the ligand-gated ion channel (TC 1.A.9) family. Acetylcholine receptor (TC 1.A.9.1) subfamily. Beta-1/CHRNB1 sub-subfamily. Pentamer of two alpha chains, and one each of the beta, delta, and gamma chains.

Its subcellular location is the postsynaptic cell membrane. The protein resides in the cell membrane. The enzyme catalyses K(+)(in) = K(+)(out). It carries out the reaction Na(+)(in) = Na(+)(out). In terms of biological role, after binding acetylcholine, the AChR responds by an extensive change in conformation that affects all subunits and leads to opening of an ion-conducting channel across the plasma membrane. In Gallus gallus (Chicken), this protein is Acetylcholine receptor subunit beta (CHRNB1).